Reading from the N-terminus, the 416-residue chain is Phosphoglycerate kinase (416 aa).

Residues V23, D24, F25, N26, Q38, R39, S62, H63, G65, R66, L121, R122, H168, and R169 each coordinate (2R)-3-phosphoglycerate. ADP is bound at residue G212. G212 lines the CDP pocket. AMP contacts are provided by A213 and K214. A213 serves as a coordination point for ATP. A Mg(2+)-binding site is contributed by A213. Positions 216 and 217 each coordinate Mg(2+). D217 is a binding site for CDP. An AMP-binding site is contributed by K218. Residue K218 coordinates ATP. G236 serves as a coordination point for ADP. G236 is a CDP binding site. Residues G237 and G311 each coordinate AMP. G237 and G311 together coordinate ATP. G336 and F341 together coordinate CDP. An ADP-binding site is contributed by F341. E342 contributes to the AMP binding site. 3 residues coordinate ATP: E342, D373, and T374. D373 serves as a coordination point for Mg(2+).

Belongs to the phosphoglycerate kinase family. Monomer. The cofactor is Mg(2+).

Its subcellular location is the cytoplasm. It localises to the mitochondrion. The enzyme catalyses (2R)-3-phosphoglycerate + ATP = (2R)-3-phospho-glyceroyl phosphate + ADP. It functions in the pathway carbohydrate degradation; glycolysis; pyruvate from D-glyceraldehyde 3-phosphate: step 2/5. In terms of biological role, catalyzes one of the two ATP producing reactions in the glycolytic pathway via the reversible conversion of 1,3-diphosphoglycerate to 3-phosphoglycerate. Both L- and D- forms of purine and pyrimidine nucleotides can be used as substrates, but the activity is much lower on pyrimidines. Negatively regulates the biosynthesis of acetyl-CoA from pyruvate in the mitochondrion. In Kluyveromyces lactis (strain ATCC 8585 / CBS 2359 / DSM 70799 / NBRC 1267 / NRRL Y-1140 / WM37) (Yeast), this protein is Phosphoglycerate kinase (PGK).